Consider the following 285-residue polypeptide: Nucleotide-binding protein Glov_2163 (285 aa).

Residue 8–15 (GMSGSGKS) coordinates ATP. Residue 59–62 (DIRG) participates in GTP binding.

This sequence belongs to the RapZ-like family.

Displays ATPase and GTPase activities. The chain is Nucleotide-binding protein Glov_2163 from Trichlorobacter lovleyi (strain ATCC BAA-1151 / DSM 17278 / SZ) (Geobacter lovleyi).